Consider the following 433-residue polypeptide: Keratin, type I cytoskeletal 17 (433 aa).

The tract at residues M1–S24 is disordered. The segment at M1 to G83 is head. S12 and S13 each carry phosphoserine. K15 participates in a covalent cross-link: Glycyl lysine isopeptide (Lys-Gly) (interchain with G-Cter in SUMO1); alternate. Residue K15 forms a Glycyl lysine isopeptide (Lys-Gly) (interchain with G-Cter in SUMO2); alternate linkage. S25, S32, S34, and S39 each carry phosphoserine. At S44 the chain carries Phosphoserine; by RPS6KA1. Residues E84–Y120 form a coil 1A region. Residues E84–L395 enclose the IF rod domain. A Phosphothreonine modification is found at T110. The tract at residues Q121–I138 is linker 1. A coil 1B region spans residues E139–R230. The segment at G231–S250 is linker 12. The tract at residues R251–D392 is coil 2. Residue K278 forms a Glycyl lysine isopeptide (Lys-Gly) (interchain with G-Cter in SUMO2) linkage. The residue at position 279 (T279) is a Phosphothreonine. S323 carries the phosphoserine modification. The tail stretch occupies residues A393–R433. Glycyl lysine isopeptide (Lys-Gly) (interchain with G-Cter in SUMO1); alternate cross-links involve residues K399, K401, and K420. Glycyl lysine isopeptide (Lys-Gly) (interchain with G-Cter in SUMO2); alternate cross-links involve residues K399, K401, and K420.

This sequence belongs to the intermediate filament family. In terms of assembly, heterodimer of a type I and a type II keratin. KRT17 associates with KRT6 isomers (KRT6A or KRT6B). Interacts with TRADD and SFN. Post-translationally, phosphorylation at Ser-44 occurs in a growth- and stress-dependent fashion in skin keratinocytes, it has no effect on filament organization.

It is found in the cytoplasm. Its function is as follows. Type I keratin involved in the formation and maintenance of various skin appendages, specifically in determining shape and orientation of hair. Required for the correct growth of hair follicles, in particular for the persistence of the anagen (growth) state. Modulates the function of TNF-alpha in the specific context of hair cycling. Regulates protein synthesis and epithelial cell growth through binding to the adapter protein SFN and by stimulating Akt/mTOR pathway. Involved in tissue repair. May be a marker of basal cell differentiation in complex epithelia and therefore indicative of a certain type of epithelial 'stem cells'. Acts as a promoter of epithelial proliferation by acting a regulator of immune response in skin: promotes Th1/Th17-dominated immune environment contributing to the development of basaloid skin tumors. May act as an autoantigen in the immunopathogenesis of psoriasis, with certain peptide regions being a major target for autoreactive T-cells and hence causing their proliferation. The protein is Keratin, type I cytoskeletal 17 of Rattus norvegicus (Rat).